Reading from the N-terminus, the 155-residue chain is 3-hydroxyacyl-[acyl-carrier-protein] dehydratase FabZ (155 aa).

Histidine 54 is an active-site residue.

Belongs to the thioester dehydratase family. FabZ subfamily.

It localises to the cytoplasm. It carries out the reaction a (3R)-hydroxyacyl-[ACP] = a (2E)-enoyl-[ACP] + H2O. Functionally, involved in unsaturated fatty acids biosynthesis. Catalyzes the dehydration of short chain beta-hydroxyacyl-ACPs and long chain saturated and unsaturated beta-hydroxyacyl-ACPs. The protein is 3-hydroxyacyl-[acyl-carrier-protein] dehydratase FabZ of Burkholderia mallei (strain NCTC 10247).